Consider the following 324-residue polypeptide: Antihemorrhagic factor cMSF (324 aa).

Positions 1–19 are cleaved as a signal peptide; the sequence is MHFLVALVLLGQIIGSTLS. Cystatin fetuin-A-type domains lie at 22–130 and 141–254; these read VRGD…VKCH and RNCL…SDCV. Residues 23 to 25 carry the Cell attachment site motif; that stretch reads RGD. Cystine bridges form between Cys28/Cys315, Cys85/Cys96, Cys110/Cys129, Cys143/Cys146, Cys205/Cys217, Cys230/Cys253, and Cys287/Cys291. Asn204 is a glycosylation site (N-linked (GlcNAc...) asparagine). An N-linked (GlcNAc...) asparagine glycan is attached at Asn282.

In terms of assembly, homodimer. In terms of tissue distribution, expressed by the liver.

Its subcellular location is the secreted. In terms of biological role, suppress hemorrhage induced by metalloproteinases from the same venom (brevilysin-H3, -H4, -H6) and from habu venom (metalloproteinases HR1A and HR1B). The non-hemorrhagic brevilysin-L4 is not inhibited by cMSF. Does not inhibit serine and cysteine proteases such as trypsin, chymotrypsin, thermolysin, and papain. The inhibition may occur by formation of a non-covalent complex between this protein and the proteinases at their metalloproteinase domains. This is Antihemorrhagic factor cMSF from Gloydius brevicauda (Korean slamosa snake).